The primary structure comprises 247 residues: Programmed cell death 1 ligand 2 (247 aa).

The N-terminal stretch at 1 to 19 (MLLLLPILNLSLQLHPVAA) is a signal peptide. The Extracellular segment spans residues 20 to 221 (LFTVTAPKEV…RMEPKVPRTW (202 aa)). The Ig-like V-type domain occupies 21–118 (FTVTAPKEVY…AWDYKYLTVK (98 aa)). 2 cysteine pairs are disulfide-bonded: cysteine 42–cysteine 102 and cysteine 143–cysteine 192. Asparagine 64, asparagine 157, asparagine 163, and asparagine 189 each carry an N-linked (GlcNAc...) asparagine glycan. In terms of domain architecture, Ig-like C2-type spans 122-203 (SYMRIDTRIL…FWNAHMKELT (82 aa)). A helical transmembrane segment spans residues 222-242 (PLHVFIPACTIALIFLAIVII). Residues 243 to 247 (QRKRI) are Cytoplasmic-facing.

Belongs to the immunoglobulin superfamily. BTN/MOG family. As to quaternary structure, interacts with PDCD1. As to expression, expressed in immature and mature bone marrow-derived dendritic cells and splenic dendritic cells. Highly expressed in placenta, liver and weakly expressed in heart, spleen, lymph nodes and thymus. Also expressed in some tumor cell lines of lymphoid origin.

Its subcellular location is the cell membrane. Involved in the costimulatory signal essential for T-cell proliferation and IFNG production in a PDCD1-independent manner. Interaction with PDCD1 inhibits T-cell proliferation by blocking cell cycle progression and cytokine production. In Mus musculus (Mouse), this protein is Programmed cell death 1 ligand 2 (Pdcd1lg2).